The sequence spans 326 residues: Balbiani ring protein 1 (326 aa).

Positions 1-33 (PSKSGPRPSKSGPRPSKSGPRPSKSGPRPSKSG) are enriched in low complexity. Residues 1-119 (PSKSGPRPSK…RESPVCDDAM (119 aa)) form a disordered region. Basic and acidic residues predominate over residues 34–51 (PRPEKCGSAMRKAEAEKC). A compositionally biased stretch (low complexity) spans 93–102 (VTPTPEVPTT). The segment covering 107 to 119 (SESRESPVCDDAM) has biased composition (basic and acidic residues).

As to expression, salivary gland.

The protein localises to the secreted. Functionally, used by the larvae to construct a supramolecular structure, the larval tube. The protein is Balbiani ring protein 1 (BR1) of Chironomus pallidivittatus (Midge).